The following is a 386-amino-acid chain: Hydrazine synthase subunit beta (386 aa).

Positions 1–34 (MVIRRKMNKMIRKGMIGAVMLGAAVAISGGVATA) are cleaved as a signal peptide.

As to quaternary structure, part of the hydrazine synthase complex that forms an elongated dimer of heterotrimers composed of one alpha, one beta and one gamma subunit.

The protein localises to the anammoxosome. Its pathway is nitrogen metabolism. Functionally, component of the hydrazine synthase complex that catalyzes the condensation of nitric oxide (NO) with ammonium to form hydrazine. The beta subunit may play a role in modulating transport of the hydroxylamine intermediate through a tunnel between the gamma and alpha subunit's active site. Is involved in anaerobic ammonium oxidation (anammox), a biological process in which nitrite is used as the electron acceptor in the conversion of ammonium to dinitrogen gas (N2) and water; this bacterial process has a major role in the Earth's nitrogen cycle and has been estimated to synthesize up to 50% of the dinitrogen gas emitted into our atmosphere from the oceans. This Kuenenia stuttgartiensis protein is Hydrazine synthase subunit beta.